We begin with the raw amino-acid sequence, 156 residues long: Small ribosomal subunit protein uS7 (156 aa).

It belongs to the universal ribosomal protein uS7 family. As to quaternary structure, part of the 30S ribosomal subunit. Contacts proteins S9 and S11.

Functionally, one of the primary rRNA binding proteins, it binds directly to 16S rRNA where it nucleates assembly of the head domain of the 30S subunit. Is located at the subunit interface close to the decoding center, probably blocks exit of the E-site tRNA. In Campylobacter curvus (strain 525.92), this protein is Small ribosomal subunit protein uS7.